A 233-amino-acid polypeptide reads, in one-letter code: Uridylate kinase (233 aa).

9–10 (GS) serves as a coordination point for ATP. G43 contributes to the UMP binding site. 2 residues coordinate ATP: G44 and R48. UMP contacts are provided by residues D65 and 113–119 (VTPGQTT). ATP is bound by residues T139, Y145, and D148.

Belongs to the UMP kinase family. In terms of assembly, homohexamer.

Its subcellular location is the cytoplasm. It carries out the reaction UMP + ATP = UDP + ADP. It functions in the pathway pyrimidine metabolism; CTP biosynthesis via de novo pathway; UDP from UMP (UMPK route): step 1/1. With respect to regulation, inhibited by UTP. Catalyzes the reversible phosphorylation of UMP to UDP. This is Uridylate kinase from Methanosarcina mazei (strain ATCC BAA-159 / DSM 3647 / Goe1 / Go1 / JCM 11833 / OCM 88) (Methanosarcina frisia).